We begin with the raw amino-acid sequence, 925 residues long: Alanine--tRNA ligase (925 aa).

Residues H611, H615, C714, and H718 each coordinate Zn(2+).

It belongs to the class-II aminoacyl-tRNA synthetase family. Zn(2+) serves as cofactor.

It localises to the cytoplasm. It catalyses the reaction tRNA(Ala) + L-alanine + ATP = L-alanyl-tRNA(Ala) + AMP + diphosphate. Catalyzes the attachment of alanine to tRNA(Ala) in a two-step reaction: alanine is first activated by ATP to form Ala-AMP and then transferred to the acceptor end of tRNA(Ala). Also edits incorrectly charged Ser-tRNA(Ala) and Gly-tRNA(Ala) via its editing domain. The sequence is that of Alanine--tRNA ligase from Methanosarcina acetivorans (strain ATCC 35395 / DSM 2834 / JCM 12185 / C2A).